Reading from the N-terminus, the 292-residue chain is E3 ubiquitin-protein ligase RNF144A (292 aa).

Residues Pro16–Leu236 form a TRIAD supradomain region. Residues Cys20, Cys23, Cys43, Cys46, Cys111, Cys116, Cys135, Cys138, Cys143, Cys146, His151, Cys156, Cys185, and Cys188 each contribute to the Zn(2+) site. The RING-type 1 zinc finger occupies Cys20–Cys70. The segment at Gln91–Cys156 adopts an IBR-type zinc-finger fold. The RING-type 2; atypical zinc-finger motif lies at Cys185–Cys214. Cys198 is a catalytic residue. Residues Cys203, Cys206, Cys211, Cys214, His226, and Cys232 each coordinate Zn(2+). A helical membrane pass occupies residues Val250–Leu270.

Belongs to the RBR family. RNF144 subfamily. In terms of assembly, self-associates. Interacts with UBE2L3. Auto-ubiquitinated.

It is found in the cell membrane. It localises to the cytoplasmic vesicle membrane. Its subcellular location is the endosome membrane. The protein resides in the endoplasmic reticulum membrane. It carries out the reaction [E2 ubiquitin-conjugating enzyme]-S-ubiquitinyl-L-cysteine + [acceptor protein]-L-lysine = [E2 ubiquitin-conjugating enzyme]-L-cysteine + [acceptor protein]-N(6)-ubiquitinyl-L-lysine.. It participates in protein modification; protein ubiquitination. E3 ubiquitin-protein ligase which accepts ubiquitin from E2 ubiquitin-conjugating enzymes UBE2L3 and UBE2L6 in the form of a thioester and then directly transfers the ubiquitin to targeted substrates. Mediates the ubiquitination and degradation of the DNA damage kinase PRKDC during DNA damage. Positively regulates DNA virus or exogenous cytosolic DNA-triggered innate immune response by mediating STING1 ubiquitination and increasing its 'Lys-6'-linked ubiquitination and translocation from the endoplasmic reticulum to the Golgi leading to downstream signaling pathways. Plays a positive role in EGF-dependent cell proliferation by prolonging EGF/EGFR signaling during EGF stimulation through EGFR ubiquitination. Increases ERK activity independently of EGFR signaling by promoting polyubiquitination and subsequent degradation of VRK3 in the cytosol. This chain is E3 ubiquitin-protein ligase RNF144A (RNF144A), found in Homo sapiens (Human).